A 369-amino-acid chain; its full sequence is Putative glutamate--cysteine ligase 2-1 (369 aa).

It belongs to the glutamate--cysteine ligase type 2 family. YbdK subfamily.

It catalyses the reaction L-cysteine + L-glutamate + ATP = gamma-L-glutamyl-L-cysteine + ADP + phosphate + H(+). Its function is as follows. ATP-dependent carboxylate-amine ligase which exhibits weak glutamate--cysteine ligase activity. This chain is Putative glutamate--cysteine ligase 2-1, found in Rhodococcus jostii (strain RHA1).